Reading from the N-terminus, the 372-residue chain is NAD(P)H-quinone oxidoreductase subunit 1 (372 aa).

8 helical membrane passes run 29-49, 97-117, 130-150, 176-196, 204-224, 254-274, 308-328, and 347-367; these read WIPLPSFLMIIGATVGVLVVV, WLFTLGPVLVVLPVFVSYLIV, VGIFLWISLSSIAPIGLLMSG, LAFSVLAIAMMSNSLSTIDIV, ILGWNVWRQPVGLIIFWIAAL, FGLFYVGSYVNLVLSALVFAI, SLGITMTVLKAYFLVFIAVLL, and FLLPVSLVNLLLTAALKLAFP.

The protein belongs to the complex I subunit 1 family. As to quaternary structure, NDH-1 is composed of at least 11 different subunits.

The protein resides in the cellular thylakoid membrane. It carries out the reaction a plastoquinone + NADH + (n+1) H(+)(in) = a plastoquinol + NAD(+) + n H(+)(out). The enzyme catalyses a plastoquinone + NADPH + (n+1) H(+)(in) = a plastoquinol + NADP(+) + n H(+)(out). Functionally, NDH-1 shuttles electrons from an unknown electron donor, via FMN and iron-sulfur (Fe-S) centers, to quinones in the respiratory and/or the photosynthetic chain. The immediate electron acceptor for the enzyme in this species is believed to be plastoquinone. Couples the redox reaction to proton translocation, and thus conserves the redox energy in a proton gradient. This chain is NAD(P)H-quinone oxidoreductase subunit 1, found in Rippkaea orientalis (strain PCC 8801 / RF-1) (Cyanothece sp. (strain PCC 8801)).